Consider the following 743-residue polypeptide: F-box protein COS111 (743 aa).

One can recognise an F-box domain in the interval 145-191 (ELHIKNLPVEILDYIFYLVDDNLDYKSCMYTCKLFYFLAKPYYYENL). 2 disordered regions span residues 224-257 (IKPG…DPQY) and 311-330 (FSNV…SSST). The span at 229-248 (DEDEQEEGQEENAENGEEEN) shows a compositional bias: acidic residues.

F-box protein probably involved in ubiquitin conjugation pathway. This chain is F-box protein COS111 (COS111), found in Candida albicans (strain SC5314 / ATCC MYA-2876) (Yeast).